The chain runs to 409 residues: Elongation factor Tu (409 aa).

In terms of domain architecture, tr-type G spans 10 to 214 (KPHVNIGTIG…EVDGYIPQPE (205 aa)). The interval 19–26 (GHVDHGKT) is G1. 19-26 (GHVDHGKT) is a GTP binding site. Thr-26 serves as a coordination point for Mg(2+). Positions 60-64 (GITIN) are G2. Residues 81–84 (DCPG) are G3. Residues 81–85 (DCPGH) and 136–139 (NKQD) contribute to the GTP site. Positions 136–139 (NKQD) are G4. The segment at 174 to 176 (SAL) is G5.

This sequence belongs to the TRAFAC class translation factor GTPase superfamily. Classic translation factor GTPase family. EF-Tu/EF-1A subfamily. In terms of assembly, monomer.

Its subcellular location is the cytoplasm. It catalyses the reaction GTP + H2O = GDP + phosphate + H(+). GTP hydrolase that promotes the GTP-dependent binding of aminoacyl-tRNA to the A-site of ribosomes during protein biosynthesis. The protein is Elongation factor Tu of Trichodesmium erythraeum (strain IMS101).